A 122-amino-acid polypeptide reads, in one-letter code: Large ribosomal subunit protein uL18 (122 aa).

This sequence belongs to the universal ribosomal protein uL18 family. Part of the 50S ribosomal subunit; part of the 5S rRNA/L5/L18/L25 subcomplex. Contacts the 5S and 23S rRNAs.

This is one of the proteins that bind and probably mediate the attachment of the 5S RNA into the large ribosomal subunit, where it forms part of the central protuberance. The sequence is that of Large ribosomal subunit protein uL18 from Desulforapulum autotrophicum (strain ATCC 43914 / DSM 3382 / VKM B-1955 / HRM2) (Desulfobacterium autotrophicum).